A 1528-amino-acid chain; its full sequence is 5'-3' exoribonuclease 1 (1528 aa).

Disordered stretches follow at residues 1246–1331 (SKKA…KSSE), 1431–1455 (PPPAPHGFGQPISFPPPPPMTNVSD), and 1470–1528 (LKKF…DEST). Basic and acidic residues predominate over residues 1274–1304 (QSEEKLRKERAHDLLNFIKKDTNEKNSESVD). The span at 1317 to 1326 (AKKVLLKRPA) shows a compositional bias: basic residues. Positions 1500 to 1517 (SSGTNSTECQSPKSQSNA) are enriched in polar residues. Threonine 1506 is subject to Phosphothreonine. Serine 1510 is subject to Phosphoserine. Residues 1518 to 1528 (ADRDNKKDEST) show a composition bias toward basic and acidic residues.

Belongs to the 5'-3' exonuclease family. Mg(2+) serves as cofactor.

The protein localises to the cytoplasm. Its subcellular location is the perinuclear region. It is found in the P-body. 3'-phosphoadenosine 5'-phosphate (pAp) is an inhibitor of KEM1. Sodium-induced GCN4 expression reduces pAp accumulation by activating HAL2 expression, and therefore maintains mRNA degradation capacity which is likely to be important for the accurate and rapid adaptation of gene expression to salt stress. Its function is as follows. Multifunctional protein that exhibits several independent functions at different levels of the cellular processes. 5'-3' exonuclease component of the nonsense-mediated mRNA decay (NMD) which is a highly conserved mRNA degradation pathway, an RNA surveillance system whose role is to identify and rid cells of mRNA with premature termination codons and thus prevents accumulation of potentially harmful truncated proteins. The NMD pathway has a second role regulating the decay of wild-type mRNAs, and especially mRNAs that are important for telomere functions. Participate in CTH2-mediated and VTS1-mediated mRNA turnover. Involved in the degradation of several hypomodified mature tRNA species and participates in the 5'-processing or the degradation of the snoRNA precursors and rRNA processing. Involved in defense against virus and suppresses viral RNA recombination by rapidly removing the 5'-truncated RNAs, the substrates of recombination, and thus reducing the chance for recombination to occur in the parental strain. Required for the assembly of the virus-like particles of the Ty3 retrotransposon and contributes to the efficient generation of narnavirus 20S RNA by playing a major role in the elimination of the non-viral upstream sequences from the primary transcripts. Degrades single-stranded DNA (ss-DNA) and can renature complementary ss-DNA as well as catalyzes the formation of heteroduplex DNA from circular ss-DNA and homologous linear ds-DNA in vitro. Acts as a microtubule-associated protein which interacts with cytoplasmic microtubules through beta-tubulin and promotes in vitro assembly of tubulin into microtubules. Associates with microtubule functions such as chromosome transmission, nuclear migration, and SPB duplication. Has also a role in G1 to S transition and is involved in nuclear fusion during karyogamy. Required for the expression of ROK1 at the post-transcriptional level and for the alpha-factor induction of the karyogamy genes KAR3 and KAR4. Plays a role in filamentous growth. This chain is 5'-3' exoribonuclease 1 (XRN1), found in Saccharomyces cerevisiae (strain ATCC 204508 / S288c) (Baker's yeast).